Here is a 570-residue protein sequence, read N- to C-terminus: Glucan 1,3-beta-glucosidase 2 (570 aa).

N-linked (GlcNAc...) asparagine glycans are attached at residues asparagine 91, asparagine 116, asparagine 121, asparagine 184, asparagine 203, and asparagine 248. Residue glutamate 338 is the Proton donor of the active site. N-linked (GlcNAc...) asparagine glycosylation occurs at asparagine 364. The active-site Nucleophile is glutamate 439. Residues asparagine 525 and asparagine 552 are each glycosylated (N-linked (GlcNAc...) asparagine).

The protein belongs to the glycosyl hydrolase 5 (cellulase A) family.

It localises to the secreted. It catalyses the reaction Successive hydrolysis of beta-D-glucose units from the non-reducing ends of (1-&gt;3)-beta-D-glucans, releasing alpha-glucose.. The chain is Glucan 1,3-beta-glucosidase 2 (exg2) from Schizosaccharomyces pombe (strain 972 / ATCC 24843) (Fission yeast).